We begin with the raw amino-acid sequence, 504 residues long: ATP synthase subunit alpha (504 aa).

171-178 (GDRATGKT) contributes to the ATP binding site.

This sequence belongs to the ATPase alpha/beta chains family. F-type ATPases have 2 components, CF(1) - the catalytic core - and CF(0) - the membrane proton channel. CF(1) has five subunits: alpha(3), beta(3), gamma(1), delta(1), epsilon(1). CF(0) has three main subunits: a(1), b(2) and c(9-12). The alpha and beta chains form an alternating ring which encloses part of the gamma chain. CF(1) is attached to CF(0) by a central stalk formed by the gamma and epsilon chains, while a peripheral stalk is formed by the delta and b chains.

It is found in the cell inner membrane. It catalyses the reaction ATP + H2O + 4 H(+)(in) = ADP + phosphate + 5 H(+)(out). Functionally, produces ATP from ADP in the presence of a proton gradient across the membrane. The alpha chain is a regulatory subunit. The chain is ATP synthase subunit alpha from Sulfurihydrogenibium sp. (strain YO3AOP1).